The chain runs to 120 residues: Large ribosomal subunit protein bL21 (120 aa).

This sequence belongs to the bacterial ribosomal protein bL21 family. As to quaternary structure, part of the 50S ribosomal subunit. Contacts protein L20.

Functionally, this protein binds to 23S rRNA in the presence of protein L20. In Roseiflexus castenholzii (strain DSM 13941 / HLO8), this protein is Large ribosomal subunit protein bL21.